We begin with the raw amino-acid sequence, 78 residues long: Beta-defensin 29 (78 aa).

Residues Met-1 to Gly-23 form the signal peptide. Cystine bridges form between Cys-40/Cys-67, Cys-47/Cys-61, and Cys-51/Cys-68.

The protein belongs to the beta-defensin family.

It localises to the secreted. In terms of biological role, has antibacterial activity. This is Beta-defensin 29 (Defb29) from Rattus norvegicus (Rat).